A 361-amino-acid polypeptide reads, in one-letter code: Diacylglycerol O-acyltransferase 2 (361 aa).

Topologically, residues 1-42 are cytoplasmic; it reads MKTLIAAYSGVLRGTGSSILSALQDLFSVTWLNRAKVEKQLQ. A helical transmembrane segment spans residues 43–61; that stretch reads VISVLQWVLSFLVLGVACS. The Lumenal portion of the chain corresponds to 62–65; sequence VILM. A helical membrane pass occupies residues 66 to 85; sequence YTFCTDCWLIAVLYFTWLVF. The Cytoplasmic portion of the chain corresponds to 86–361; the sequence is DWNTPKKGGR…LPETEVLEVN (276 aa).

Belongs to the diacylglycerol acyltransferase family. As to quaternary structure, forms multimeric complexes consisting of several DGAT2 subunits. Interacts with SLC27A1 and this interaction is enhanced in the presence of ZFYVE1.

It localises to the endoplasmic reticulum membrane. The protein resides in the lipid droplet. The protein localises to the cytoplasm. It is found in the perinuclear region. It carries out the reaction an acyl-CoA + a 1,2-diacyl-sn-glycerol = a triacyl-sn-glycerol + CoA. The enzyme catalyses all-trans-retinol + an acyl-CoA = an all-trans-retinyl ester + CoA. It catalyses the reaction 2-(9Z-octadecenoyl)-glycerol + (9Z)-octadecenoyl-CoA = 1,2-di-(9Z-octadecenoyl)-sn-glycerol + CoA. The catalysed reaction is 1,2-di-(9Z-octadecenoyl)-sn-glycerol + (9Z)-octadecenoyl-CoA = 1,2,3-tri-(9Z-octadecenoyl)-glycerol + CoA. It carries out the reaction all-trans-retinol + hexadecanoyl-CoA = all-trans-retinyl hexadecanoate + CoA. The enzyme catalyses 1-O-(9Z-octadecenyl)-glycerol + (9Z)-octadecenoyl-CoA = 1-O-(9Z-octadecyl)-3-(9Z-octadecenoyl)-glycerol + CoA. It catalyses the reaction 1-(9Z-octadecenoyl)-glycerol + (9Z)-octadecenoyl-CoA = 1,2-di-(9Z-octadecenoyl)-glycerol + CoA. The catalysed reaction is 1,2-di-(9Z-octadecenoyl)-sn-glycerol + hexadecanoyl-CoA = 1,2-di-(9Z)-octadecenoyl-3-hexadecanoyl-sn-glycerol + CoA. It carries out the reaction 1,3-di-(9Z-octadecenoyl)-glycerol + (9Z)-octadecenoyl-CoA = 1,2,3-tri-(9Z-octadecenoyl)-glycerol + CoA. The enzyme catalyses 2,3-di-(9Z)-octadecenoyl-sn-glycerol + (9Z)-octadecenoyl-CoA = 1,2,3-tri-(9Z-octadecenoyl)-glycerol + CoA. It catalyses the reaction 2-(9Z-octadecenoyl)-glycerol + hexadecanoyl-CoA = 1-hexadecanoyl-2-(9Z-octadecenoyl)-sn-glycerol + CoA. Its pathway is glycerolipid metabolism; triacylglycerol biosynthesis. Its activity is regulated as follows. Inhibited by niacin. In terms of biological role, essential acyltransferase that catalyzes the terminal and only committed step in triacylglycerol synthesis by using diacylglycerol and fatty acyl CoA as substrates. Required for synthesis and storage of intracellular triglycerides. Probably plays a central role in cytosolic lipid accumulation. In liver, is primarily responsible for incorporating endogenously synthesized fatty acids into triglycerides. Also functions as an acyl-CoA retinol acyltransferase (ARAT). Also able to use 1-monoalkylglycerol (1-MAkG) as an acyl acceptor for the synthesis of monoalkyl-monoacylglycerol (MAMAG). This chain is Diacylglycerol O-acyltransferase 2 (DGAT2), found in Bos taurus (Bovine).